Reading from the N-terminus, the 747-residue chain is Anoctamin-9 (747 aa).

The Cytoplasmic segment spans residues 1-193; it reads MQDDESSQIF…LYFTWLGWYT (193 aa). Residues 194–214 traverse the membrane as a helical segment; it reads YMLVPAAVVGLIVFLSGFALF. At 215-259 the chain is on the extracellular side; sequence DSSQISKEICSANDIFMCPLGDHSHRYLRLSEMCTFAKLTHLFDN. Position 245 is a phosphoserine; by PKA (serine 245). Residues 260–280 traverse the membrane as a helical segment; the sequence is EGTVLFAIFMALWATVFLEIW. The Cytoplasmic portion of the chain corresponds to 281–326; it reads KRKRAHEVQSWKLYEWDEEEEEMALELINSPHYKLKDHRHSYLSST. Residues 327–347 traverse the membrane as a helical segment; it reads IILILSLFMICLMIGMAHVLV. At 348 to 364 the chain is on the extracellular side; it reads VYRVLAGALFSSLVKQQ. Residues 365–385 form a helical membrane-spanning segment; that stretch reads VTTAVVVTGAVVHYIIIVIMT. Residues 386–414 lie on the Cytoplasmic side of the membrane; the sequence is KVNKYVALKLCKFEESGTFSEQERKFTVK. A helical membrane pass occupies residues 415–435; sequence FFILQFFAHFSSLIYIAFILG. The Extracellular segment spans residues 436–543; the sequence is RINGHPGKST…EMMIQYGFTT (108 aa). A helical membrane pass occupies residues 544-564; the sequence is IFVAAFPLAPLLALFSNLVEI. Residues 565–595 are Cytoplasmic-facing; sequence RLDAIKMVRLQRRLVPRKAKDIGTWLQVLET. The helical transmembrane segment at 596-616 threads the bilayer; that stretch reads IGVLAVIANGMVIAFTSEFIP. Over 617–695 the chain is Extracellular; the sequence is RVVYKYHYGP…FWFILAIRLT (79 aa). Asparagine 630, asparagine 643, asparagine 665, and asparagine 681 each carry an N-linked (GlcNAc...) asparagine glycan. The helical transmembrane segment at 696 to 716 threads the bilayer; that stretch reads FVILFEHFALCIKLIAAWFVP. Over 717-747 the chain is Cytoplasmic; the sequence is DVPQKVKNEVLQEKYDRIRHRMRFSSRSTDV.

This sequence belongs to the anoctamin family. Phosphorylation on Ser-245 by cAMP-dependent protein kinase A (PKA)is essential for activation of its cation channel activity. In terms of tissue distribution, highly expressed in the olfactory epithelium, particularly in mature olfactory sensory neurons (at protein level). Expressed in the kidney (at protein level). Predominant expression seen in epithelial tissues. Highly expressed in the small intestine, colon and stomach.

It is found in the cell membrane. It localises to the endoplasmic reticulum. It catalyses the reaction a 1,2-diacyl-sn-glycero-3-phospho-L-serine(in) = a 1,2-diacyl-sn-glycero-3-phospho-L-serine(out). The enzyme catalyses a beta-D-galactosyl-(1&lt;-&gt;1')-N-acylsphing-4-enine(out) = a beta-D-galactosyl-(1&lt;-&gt;1')-N-acylsphing-4-enine(in). The catalysed reaction is a 1,2-diacyl-sn-glycero-3-phosphocholine(in) = a 1,2-diacyl-sn-glycero-3-phosphocholine(out). It carries out the reaction Ca(2+)(in) = Ca(2+)(out). It catalyses the reaction Na(+)(in) = Na(+)(out). The enzyme catalyses K(+)(in) = K(+)(out). Its activity is regulated as follows. Cation channel activity is activated via phosphorylation on Ser-245 by cAMP-dependent protein kinase A (PKA). Inhibited by NaCl. Its function is as follows. PKA-activated nonselective cation channel. Discriminates poorly among cations but is more permeable to Ca(2+) ions than to monovalent cations. Acts as a calcium-activated calcium permeable channel which may operate as a endoplasmic reticulum (ER) Ca(2+)-leak channel, reducing the loading of the ER Ca(2+) store. Regulates intracellular Ca2+ signals, ion channel activity, and cytokine release in the renal tissue. Plays an important role in olfaction, amplifying cAMP-evoked cyclic nucleotide-gated (CNG) channel currents in the olfactory sensory neurons. Has calcium-dependent phospholipid scramblase activity; scrambles phosphatidylserine, phosphatidylcholine and galactosylceramide. Does not exhibit calcium-activated chloride channel (CaCC) activity. Can inhibit the activity of ANO1. In Mus musculus (Mouse), this protein is Anoctamin-9.